The sequence spans 293 residues: Mimecan (293 aa).

Positions 1-19 (MKTLQATFFLVAFVPLVKP) are cleaved as a signal peptide. An N-linked (GlcNAc...) asparagine glycan is attached at asparagine 60. LRR repeat units follow at residues 107-126 (EAVPPLPKETAYLYARFNKI), 127-150 (KRIAVSDFADITTLRRIDFSGNMI), 151-174 (EEIEDGAFSKLLLLEELSLAENRL), 175-194 (VKLPVLPPKLTTFNANQNRI), 195-220 (KSRGIKNNAFKKLTNLAYLYLGHNAL), 221-241 (ESVPLNLPESLRILHLQHNNI), and 242-272 (TTITDDTFCKSNNTRYIRTRMDEIRMEGNPI). Residues asparagine 240 and asparagine 253 are each glycosylated (N-linked (GlcNAc...) asparagine). Cysteine 250 and cysteine 283 form a disulfide bridge.

Belongs to the small leucine-rich proteoglycan (SLRP) family. SLRP class III subfamily. Contains keratan sulfate. In terms of tissue distribution, expressed in many tissues.

It is found in the secreted. It localises to the extracellular space. The protein localises to the extracellular matrix. Induces bone formation in conjunction with TGF-beta-1 or TGF-beta-2. In Coturnix japonica (Japanese quail), this protein is Mimecan (OGN).